A 282-amino-acid chain; its full sequence is Parvulin-like PPIase (282 aa).

An N-terminal signal peptide occupies residues 1-20 (MKKLSVIFLSVSMLSSIAFC). The 94-residue stretch at 138 to 231 (KEQIKVAHIL…FGWHIIKVLE (94 aa)) folds into the PpiC domain.

Belongs to the PpiC/parvulin rotamase family.

It is found in the cell outer membrane. It carries out the reaction [protein]-peptidylproline (omega=180) = [protein]-peptidylproline (omega=0). The chain is Parvulin-like PPIase (plp) from Rickettsia typhi (strain ATCC VR-144 / Wilmington).